Consider the following 569-residue polypeptide: Amyloid-beta A4 precursor protein-binding family A member 3 (569 aa).

M1 is subject to N-acetylmethionine. Disordered regions lie at residues 1–53 (MEFL…MELD) and 124–168 (AQSV…SSPE). Basic and acidic residues predominate over residues 19–32 (EEPKGPEVPSEDHP). A compositionally biased stretch (low complexity) spans 132-141 (AQAAPRLLQP). S166 and S367 each carry phosphoserine. The 165-residue stretch at 212-376 (DGVLFGAKYL…SASASHPHNG (165 aa)) folds into the PID domain. 2 PDZ domains span residues 389 to 475 (EVCI…IIHC) and 480 to 554 (TAVI…TMPA).

In terms of assembly, binds to the cytoplasmic domain of amyloid protein (APP). Interacts with HIF1AN (via N-terminus). Interacts with NECAB3; seems to mediate the interaction between NECAB3 and HIF1AN. In terms of tissue distribution, ubiquitous.

It localises to the cytoplasm. The protein resides in the perinuclear region. Its function is as follows. May modulate processing of the amyloid-beta precursor protein (APP) and hence formation of APP-beta. May enhance the activity of HIF1A in macrophages by inhibiting the activity of HIF1AN. The polypeptide is Amyloid-beta A4 precursor protein-binding family A member 3 (Apba3) (Rattus norvegicus (Rat)).